The chain runs to 230 residues: Endonuclease NucS (230 aa).

It belongs to the NucS endonuclease family.

The protein localises to the cytoplasm. Its function is as follows. Cleaves both 3' and 5' ssDNA extremities of branched DNA structures. This is Endonuclease NucS from Corynebacterium aurimucosum (strain ATCC 700975 / DSM 44827 / CIP 107346 / CN-1) (Corynebacterium nigricans).